A 161-amino-acid polypeptide reads, in one-letter code: Glycine cleavage system H protein 3 (161 aa).

Residues 40-122 (TVTLGLTDVG…YGDAWIVKIK (83 aa)) enclose the Lipoyl-binding domain. N6-lipoyllysine is present on lysine 81.

It belongs to the GcvH family. As to quaternary structure, the glycine cleavage system is composed of four proteins: P, T, L and H. (R)-lipoate is required as a cofactor.

In terms of biological role, the glycine cleavage system catalyzes the degradation of glycine. The H protein shuttles the methylamine group of glycine from the P protein to the T protein. In Aquifex aeolicus (strain VF5), this protein is Glycine cleavage system H protein 3.